Here is a 577-residue protein sequence, read N- to C-terminus: Proline--tRNA ligase (577 aa).

The protein belongs to the class-II aminoacyl-tRNA synthetase family. ProS type 1 subfamily. As to quaternary structure, homodimer.

It is found in the cytoplasm. It carries out the reaction tRNA(Pro) + L-proline + ATP = L-prolyl-tRNA(Pro) + AMP + diphosphate. In terms of biological role, catalyzes the attachment of proline to tRNA(Pro) in a two-step reaction: proline is first activated by ATP to form Pro-AMP and then transferred to the acceptor end of tRNA(Pro). As ProRS can inadvertently accommodate and process non-cognate amino acids such as alanine and cysteine, to avoid such errors it has two additional distinct editing activities against alanine. One activity is designated as 'pretransfer' editing and involves the tRNA(Pro)-independent hydrolysis of activated Ala-AMP. The other activity is designated 'posttransfer' editing and involves deacylation of mischarged Ala-tRNA(Pro). The misacylated Cys-tRNA(Pro) is not edited by ProRS. The sequence is that of Proline--tRNA ligase from Helicobacter pylori (strain G27).